Reading from the N-terminus, the 338-residue chain is Heat-inducible transcription repressor HrcA (338 aa).

This sequence belongs to the HrcA family.

In terms of biological role, negative regulator of class I heat shock genes (grpE-dnaK-dnaJ and groELS operons). Prevents heat-shock induction of these operons. The protein is Heat-inducible transcription repressor HrcA of Bacillus cereus (strain AH820).